Reading from the N-terminus, the 742-residue chain is uncharacterized protein (742 aa).

The segment at 167 to 471 is disordered; the sequence is GIVPPEPWGH…AAGAAGGGGA (305 aa). Pro residues predominate over residues 205–218; the sequence is PAPPPSLFAPPPPS. Composition is skewed to polar residues over residues 318–331 and 358–368; these read SPATSNEISSNAVS and GSPQTLSTAPS. Residues 386–401 show a composition bias toward pro residues; it reads TAGPAAPPTTGGPPAP. The segment covering 421 to 432 has biased composition (low complexity); it reads PLSGGVPGGAVP. Residues 433–447 show a composition bias toward pro residues; that stretch reads LGPPPTPPPAAPVTT. Residues 448 to 464 are compositionally biased toward low complexity; sequence PPLASGAPVAPTGAAAG.

May be involved in the ESX-1 / type VII specialized secretion system (T7SS), which exports several proteins including EsxA and EsxB. Involved in DNA conjugation in the recipient strain. This is an uncharacterized protein from Mycolicibacterium smegmatis (strain MKD8) (Mycobacterium smegmatis).